The primary structure comprises 320 residues: TATA box-binding protein-like 2 (320 aa).

The protein belongs to the TBP family. As to expression, expression is restricted to the gonads, and is higher in the ovary than the testis.

It localises to the nucleus. In terms of biological role, TATA box-binding transcription factor. Members of the TBP family are differentially required to regulate transcription and development during early embryogenesis. Required for gastrulation. Regulates a large subset of genes that are ventrally expressed. Binds to a subset of promoters. This chain is TATA box-binding protein-like 2, found in Xenopus laevis (African clawed frog).